A 101-amino-acid polypeptide reads, in one-letter code: Urease subunit beta (101 aa).

It belongs to the urease beta subunit family. As to quaternary structure, heterotrimer of UreA (gamma), UreB (beta) and UreC (alpha) subunits. Three heterotrimers associate to form the active enzyme.

The protein resides in the cytoplasm. It catalyses the reaction urea + 2 H2O + H(+) = hydrogencarbonate + 2 NH4(+). It functions in the pathway nitrogen metabolism; urea degradation; CO(2) and NH(3) from urea (urease route): step 1/1. The sequence is that of Urease subunit beta from Burkholderia orbicola (strain AU 1054).